A 53-amino-acid polypeptide reads, in one-letter code: uncharacterized protein (53 aa).

The protein belongs to the ycf15 family.

The protein localises to the plastid. The protein resides in the chloroplast. This is an uncharacterized protein from Helianthus annuus (Common sunflower).